The following is a 1453-amino-acid chain: Spike glycoprotein (1453 aa).

The N-terminal stretch at 1-31 (MIVLTLCLFLVLYNSVICTSNNECVQVNVTQ) is a signal peptide. The segment at 32–780 (LPGNENIIRD…WTTTPNFYYY (749 aa)) is S1. At 32–1394 (LPGNENIIRD…NRIETYVKWP (1363 aa)) the chain is on the virion surface side. The tract at residues 661-805 (VIYEEGDNIV…DSNDVDCEPI (145 aa)) is interaction with host ANPEP. The interval 781 to 1453 (SIYNYTNERV…YEPIEKVHVH (673 aa)) is S2. Residues 1026–1047 (AGGITLGALGGGAVSIPFAVAV) form a fusion peptide region. A heptad repeat 1 (HR1) region spans residues 1041–1160 (IPFAVAVQAR…QVDRLITGRL (120 aa)). Coiled coils occupy residues 1108–1152 (QDVV…DAQV) and 1342–1384 (TYLN…LEWL). The segment at 1309–1406 (PDYIDINQTV…VWLLIGLVVI (98 aa)) is heptad repeat 2 (HR2). A helical membrane pass occupies residues 1395–1414 (WYVWLLIGLVVIFCIPLLLF). Topologically, residues 1415–1453 (CCCSTGCCGCFGCIGSCCHSMCSRRQFESYEPIEKVHVH) are intravirion. Residues 1449 to 1453 (KVHVH) carry the KxHxx motif.

The protein belongs to the alphacoronaviruses spike protein family. As to quaternary structure, homotrimer. During virus morphogenesis, found in a complex with M and HE proteins. Interacts with host ANPEP.

The protein localises to the virion membrane. It localises to the host endoplasmic reticulum-Golgi intermediate compartment membrane. S1 region attaches the virion to the cell membrane by interacting with host ANPEP/aminopeptidase N, initiating the infection. Binding to the receptor probably induces conformational changes in the S glycoprotein unmasking the fusion peptide of S2 region and activating membranes fusion. S2 region belongs to the class I viral fusion protein. Under the current model, the protein has at least 3 conformational states: pre-fusion native state, pre-hairpin intermediate state, and post-fusion hairpin state. During viral and target cell membrane fusion, the coiled coil regions (heptad repeats) regions assume a trimer-of-hairpins structure, positioning the fusion peptide in close proximity to the C-terminal region of the ectodomain. The formation of this structure appears to drive apposition and subsequent fusion of viral and target cell membranes. The sequence is that of Spike glycoprotein from Canis lupus familiaris (Dog).